The chain runs to 188 residues: ATP synthase subunit b (188 aa).

A helical transmembrane segment spans residues 5–25 (MLLIFMMIVMIASSAMAAEAE).

This sequence belongs to the ATPase B chain family. F-type ATPases have 2 components, F(1) - the catalytic core - and F(0) - the membrane proton channel. F(1) has five subunits: alpha(3), beta(3), gamma(1), delta(1), epsilon(1). F(0) has three main subunits: a(1), b(2) and c(10-14). The alpha and beta chains form an alternating ring which encloses part of the gamma chain. F(1) is attached to F(0) by a central stalk formed by the gamma and epsilon chains, while a peripheral stalk is formed by the delta and b chains.

The protein resides in the cell inner membrane. In terms of biological role, f(1)F(0) ATP synthase produces ATP from ADP in the presence of a proton or sodium gradient. F-type ATPases consist of two structural domains, F(1) containing the extramembraneous catalytic core and F(0) containing the membrane proton channel, linked together by a central stalk and a peripheral stalk. During catalysis, ATP synthesis in the catalytic domain of F(1) is coupled via a rotary mechanism of the central stalk subunits to proton translocation. Component of the F(0) channel, it forms part of the peripheral stalk, linking F(1) to F(0). The polypeptide is ATP synthase subunit b (Thermodesulfovibrio yellowstonii (strain ATCC 51303 / DSM 11347 / YP87)).